Reading from the N-terminus, the 49-residue chain is uncharacterized protein (49 aa).

Residues 1–22 (MKLNAFHLVVVVLIVSIFSVSS) form the signal peptide.

It localises to the secreted. This is an uncharacterized protein from Dictyostelium discoideum (Social amoeba).